Consider the following 515-residue polypeptide: Glucose-6-phosphate 1-dehydrogenase (515 aa).

A2 carries the N-acetylalanine modification. Position 8 is a phosphoserine (S8). T10 bears the Phosphothreonine mark. NADP(+) is bound by residues 38-45 (GASGDLAK) and R72. The residue at position 89 (K89) is an N6-acetyllysine. Positions 147 and 171 each coordinate NADP(+). Residues K171, 201 to 205 (HYLGK), E239, and D258 contribute to the D-glucose 6-phosphate site. Position 171 is an N6-(2-hydroxyisobutyryl)lysine; alternate (K171). K171 carries the post-translational modification N6-acetyllysine; alternate. Catalysis depends on H263, which acts as the Proton acceptor. R357 serves as a coordination point for NADP(+). D-glucose 6-phosphate-binding residues include K360 and R365. 3 residues coordinate NADP(+): K366, R370, and R393. Q395 is a binding site for D-glucose 6-phosphate. NADP(+)-binding positions include 401–403 (YTK) and 421–423 (DLT). N6-acetyllysine is present on K403. Residue K432 is modified to N6-acetyllysine. R487 lines the NADP(+) pocket. K497 is subject to N6-acetyllysine. Positions 503 and 509 each coordinate NADP(+). Y503 carries the post-translational modification Phosphotyrosine.

It belongs to the glucose-6-phosphate dehydrogenase family. Homotetramer; dimer of dimers. Interacts with SIRT2; the interaction is enhanced by H(2)O(2) treatment. Forms a ternary complex with ALDOB and TP53; this interaction is direct. ALDOB stabilizes the complex inhibiting G6PD activity and keeping oxidative pentose phosphate metabolism in check. Acetylated by ELP3 at Lys-403; acetylation inhibits its homodimerization and enzyme activity. Deacetylated by SIRT2 at Lys-403; deacetylation stimulates its enzyme activity.

The protein resides in the cytoplasm. Its subcellular location is the cytosol. It localises to the membrane. It carries out the reaction D-glucose 6-phosphate + NADP(+) = 6-phospho-D-glucono-1,5-lactone + NADPH + H(+). Its pathway is carbohydrate degradation; pentose phosphate pathway; D-ribulose 5-phosphate from D-glucose 6-phosphate (oxidative stage): step 1/3. Functionally, cytosolic glucose-6-phosphate dehydrogenase that catalyzes the first and rate-limiting step of the oxidative branch within the pentose phosphate pathway/shunt, an alternative route to glycolysis for the dissimilation of carbohydrates and a major source of reducing power and metabolic intermediates for fatty acid and nucleic acid biosynthetic processes. This Cricetulus griseus (Chinese hamster) protein is Glucose-6-phosphate 1-dehydrogenase (G6PD).